Reading from the N-terminus, the 243-residue chain is Uridylate kinase (243 aa).

ATP is bound at residue 15–18 (KLSG). The tract at residues 23-28 (GEEGFG) is involved in allosteric activation by GTP. Gly-57 is a binding site for UMP. Gly-58 and Arg-62 together coordinate ATP. UMP is bound by residues Asp-77 and 138 to 145 (TGNPFFTT). ATP contacts are provided by Thr-165, Phe-171, and Asp-174.

The protein belongs to the UMP kinase family. Homohexamer.

It localises to the cytoplasm. The catalysed reaction is UMP + ATP = UDP + ADP. The protein operates within pyrimidine metabolism; CTP biosynthesis via de novo pathway; UDP from UMP (UMPK route): step 1/1. Its activity is regulated as follows. Allosterically activated by GTP. Inhibited by UTP. In terms of biological role, catalyzes the reversible phosphorylation of UMP to UDP. The sequence is that of Uridylate kinase from Aliivibrio fischeri (strain ATCC 700601 / ES114) (Vibrio fischeri).